We begin with the raw amino-acid sequence, 1345 residues long: Protein dispatched homolog 2 (1345 aa).

The disordered stretch occupies residues Met-1–Pro-28. A helical membrane pass occupies residues Val-125–Gly-145. N-linked (GlcNAc...) asparagine glycosylation is found at Asn-304 and Asn-420. One can recognise an SSD domain in the interval Leu-429–Leu-598. Helical transmembrane passes span Leu-440–Leu-460, Leu-465–Leu-485, Phe-497–Phe-517, Phe-544–Leu-564, Cys-572–Leu-592, and Tyr-659–Ser-679. Asn-776 carries N-linked (GlcNAc...) asparagine glycosylation. The next 5 membrane-spanning stretches (helical) occupy residues Pro-919–Trp-939, Leu-945–Leu-965, Ala-974–Ser-994, Ala-1019–Leu-1039, and Leu-1043–Gln-1063. Disordered regions lie at residues Val-1251 to Ile-1271 and Pro-1295 to Ser-1345. The segment covering Met-1297–Ser-1306 has biased composition (polar residues). Omega-N-methylarginine is present on Arg-1310.

This sequence belongs to the dispatched family.

It localises to the membrane. The chain is Protein dispatched homolog 2 (Disp2) from Mus musculus (Mouse).